The chain runs to 386 residues: Protein RETICULATA-RELATED 4, chloroplastic (386 aa).

A chloroplast-targeting transit peptide spans 1-61 (MAIASCFFCV…RRVPITPVLS (61 aa)). Residues 61-99 (SASSGNGGSDNNGGGLSGGGGGGDGGKNDGDGHGDEDRD) form a disordered region. Over residues 65 to 85 (GNGGSDNNGGGLSGGGGGGDG) the composition is skewed to gly residues. The segment covering 86 to 99 (GKNDGDGHGDEDRD) has biased composition (basic and acidic residues). Transmembrane regions (helical) follow at residues 201–221 (VVFA…YLPA) and 273–293 (KLFA…NAFI).

The protein belongs to the RETICULATA family.

The protein resides in the plastid. It is found in the chloroplast membrane. Its function is as follows. May play a role in leaf development. This chain is Protein RETICULATA-RELATED 4, chloroplastic, found in Arabidopsis thaliana (Mouse-ear cress).